A 258-amino-acid chain; its full sequence is MLLGVNIDHIAVLREARKVADPDPLDALGICKRARADQITIHLREDRRHMHDMDAKNIIELSALPVNLECATEPSMIDIACRLRPHRVTLVPEKREEVTTEGGLAVTGEQTRLQEAIKRLQEKEIEVSLFIDPASDAVKASSDLGVEWIEFHTGKYANIYAMLYSNLSKTHHSIPELKLPRSVLKKMLEEELESLSALSAEARVLGLKVAAGHGLNYHNVQAVAQIEEIEELNIGQSIIARSVYTGLEQAILDMKSLL.

Residue Asn-6 coordinates 3-amino-2-oxopropyl phosphate. 8 to 9 provides a ligand contact to 1-deoxy-D-xylulose 5-phosphate; sequence DH. 3-amino-2-oxopropyl phosphate is bound at residue Arg-17. The Proton acceptor role is filled by His-42. Arg-44 and His-49 together coordinate 1-deoxy-D-xylulose 5-phosphate. Residue Glu-69 is the Proton acceptor of the active site. Thr-99 lines the 1-deoxy-D-xylulose 5-phosphate pocket. The active-site Proton donor is His-213. Residues Gly-214 and 235–236 contribute to the 3-amino-2-oxopropyl phosphate site; that span reads GQ.

It belongs to the PNP synthase family. As to quaternary structure, homooctamer; tetramer of dimers.

The protein resides in the cytoplasm. It carries out the reaction 3-amino-2-oxopropyl phosphate + 1-deoxy-D-xylulose 5-phosphate = pyridoxine 5'-phosphate + phosphate + 2 H2O + H(+). It functions in the pathway cofactor biosynthesis; pyridoxine 5'-phosphate biosynthesis; pyridoxine 5'-phosphate from D-erythrose 4-phosphate: step 5/5. Its function is as follows. Catalyzes the complicated ring closure reaction between the two acyclic compounds 1-deoxy-D-xylulose-5-phosphate (DXP) and 3-amino-2-oxopropyl phosphate (1-amino-acetone-3-phosphate or AAP) to form pyridoxine 5'-phosphate (PNP) and inorganic phosphate. This chain is Pyridoxine 5'-phosphate synthase, found in Sulfurovum sp. (strain NBC37-1).